The following is a 260-amino-acid chain: Hydroxyethylthiazole kinase (260 aa).

ATP contacts are provided by arginine 126 and serine 172. A substrate-binding site is contributed by glycine 199.

This sequence belongs to the Thz kinase family. Mg(2+) serves as cofactor.

The enzyme catalyses 5-(2-hydroxyethyl)-4-methylthiazole + ATP = 4-methyl-5-(2-phosphooxyethyl)-thiazole + ADP + H(+). Its pathway is cofactor biosynthesis; thiamine diphosphate biosynthesis; 4-methyl-5-(2-phosphoethyl)-thiazole from 5-(2-hydroxyethyl)-4-methylthiazole: step 1/1. In terms of biological role, catalyzes the phosphorylation of the hydroxyl group of 4-methyl-5-beta-hydroxyethylthiazole (THZ). This chain is Hydroxyethylthiazole kinase, found in Burkholderia thailandensis (strain ATCC 700388 / DSM 13276 / CCUG 48851 / CIP 106301 / E264).